The chain runs to 526 residues: Peptide chain release factor 3 (526 aa).

In terms of domain architecture, tr-type G spans 9–277 (NKRRTFAIIS…DFVEYAPGPQ (269 aa)). Residues 18–25 (SHPDAGKT), 86–90 (DTPGH), and 140–143 (NKLD) contribute to the GTP site.

It belongs to the TRAFAC class translation factor GTPase superfamily. Classic translation factor GTPase family. PrfC subfamily.

The protein resides in the cytoplasm. Functionally, increases the formation of ribosomal termination complexes and stimulates activities of RF-1 and RF-2. It binds guanine nucleotides and has strong preference for UGA stop codons. It may interact directly with the ribosome. The stimulation of RF-1 and RF-2 is significantly reduced by GTP and GDP, but not by GMP. This chain is Peptide chain release factor 3, found in Legionella pneumophila (strain Paris).